We begin with the raw amino-acid sequence, 291 residues long: Phytanoyl-CoA dioxygenase domain-containing protein 1 (291 aa).

Thr55 bears the Phosphothreonine mark. Residues Lys102, Met141, 156–158 (HQD), and Trp174 each bind 2-oxoglutarate. His156 and Asp158 together coordinate Fe cation. His246 is a binding site for Fe cation. Residues Ser248 and Arg257 each contribute to the 2-oxoglutarate site.

This sequence belongs to the PhyH family. PHYHD1 subfamily. Requires Fe cation as cofactor.

Its function is as follows. 2-oxoglutarate(2OG)-dependent dioxygenase that catalyzes the conversion of 2-oxoglutarate to succinate and CO(2) in an iron-dependent manner. However, does not couple 2OG turnover to the hydroxylation of acyl-coenzyme A derivatives, implying that it is not directly involved in phytanoyl coenzyme-A metabolism. Does not show detectable activity towards fatty acid CoA thioesters. The protein is Phytanoyl-CoA dioxygenase domain-containing protein 1 of Mus musculus (Mouse).